An 898-amino-acid chain; its full sequence is Phosphoenolpyruvate carboxylase (898 aa).

Catalysis depends on residues H134 and K564.

This sequence belongs to the PEPCase type 1 family. Mg(2+) serves as cofactor.

It carries out the reaction oxaloacetate + phosphate = phosphoenolpyruvate + hydrogencarbonate. Forms oxaloacetate, a four-carbon dicarboxylic acid source for the tricarboxylic acid cycle. In Chromobacterium violaceum (strain ATCC 12472 / DSM 30191 / JCM 1249 / CCUG 213 / NBRC 12614 / NCIMB 9131 / NCTC 9757 / MK), this protein is Phosphoenolpyruvate carboxylase.